The following is a 235-amino-acid chain: CD-NTase-associated protein 13 (235 aa).

A run of 2 helical transmembrane segments spans residues 14-34 and 45-65; these read IVHH…LIWI and IIFT…IVGL.

In the C-terminal section; belongs to the bacterial STING family. In terms of assembly, homodimer.

It is found in the cell inner membrane. In terms of biological role, effector protein of a CBASS antivirus system. CBASS (cyclic oligonucleotide-based antiphage signaling system) provides immunity against bacteriophage. The CD-NTase protein synthesizes cyclic nucleotides in response to infection; these serve as specific second messenger signals. The signals activate a diverse range of effectors, leading to bacterial cell death and thus abortive phage infection. A type I-D(GG) CBASS system. Binds cyclic dinucleotides: binds c-di-GMP (synthesized by the cognate CdnE encoded upstream in the same operon), cyclic 3'3'-cyclic GMP-AMP (3'3'-cGAMP) but not cUMP-AMP. The effector protein for this CBASS system, its activity is stimulated by c-di-GMP and leads to cell death. This is CD-NTase-associated protein 13 from Flavobacteriaceae sp. genome_bin_11.